The sequence spans 366 residues: Isocitrate dehydrogenase [NAD] subunit alpha, mitochondrial (366 aa).

The N-terminal 27 residues, Met1–Phe27, are a transit peptide targeting the mitochondrion. Lys77 carries the post-translational modification N6-succinyllysine. Residue Thr101 is modified to Phosphothreonine. Arg115, Arg125, and Arg146 together coordinate substrate. The residue at position 223 (Lys223) is an N6-acetyllysine. The Mg(2+) site is built by Asp233, Asp257, and Asp261. Position 343 is an N6-acetyllysine; alternate (Lys343). The residue at position 343 (Lys343) is an N6-succinyllysine; alternate. At Lys350 the chain carries N6-succinyllysine.

The protein belongs to the isocitrate and isopropylmalate dehydrogenases family. In terms of assembly, heterooligomer of subunits alpha (IDH3A), beta (IDH3B), and gamma (IDH3G) in the apparent ratio of 2:1:1. The heterodimer containing one IDH3A and one IDH3B subunit and the heterodimer containing one IDH3A and one IDH3G subunit assemble into a heterotetramer (which contains two subunits of IDH3A, one of IDH3B and one of IDH3G) and further into the heterooctamer. Mg(2+) is required as a cofactor. Mn(2+) serves as cofactor.

It is found in the mitochondrion. The enzyme catalyses D-threo-isocitrate + NAD(+) = 2-oxoglutarate + CO2 + NADH. Its activity is regulated as follows. The heterotetramer and the heterodimer composed of IDH3A and IDH3G subunits can be allosterically activated by citrate (CIT) or/and ADP, and the two activators can act independently or synergistically. The heterodimer composed of IDH3A and IDH3B subunits cannot be allosterically regulated and the allosteric regulation of the heterotetramer is through the IDH3G subunit and not the IDH3B subunit. The IDH3G subunit contains the allosteric site which consists of a CIT-binding site and an ADP-binding site, and the binding of CIT and ADP causes conformational changes at the allosteric site which are transmitted to the active site in the catalytic subunit (IDH3A) through a cascade of conformational changes at the heterodimer interface, leading to stabilization of the isocitrate-binding at the active site and thus activation of the enzyme. ATP can activate the heterotetramer and the heterodimer composed of IDH3A and IDH3G subunits at low concentrations but inhibits their activities at high concentrations, whereas ATP exhibits only inhibitory effect on the heterodimer composed of IDH3A and IDH3B subunits. Functionally, catalytic subunit of the enzyme which catalyzes the decarboxylation of isocitrate (ICT) into alpha-ketoglutarate. The heterodimer composed of the alpha (IDH3A) and beta (IDH3B) subunits and the heterodimer composed of the alpha (IDH3A) and gamma (IDH3G) subunits, have considerable basal activity but the full activity of the heterotetramer (containing two subunits of IDH3A, one of IDH3B and one of IDH3G) requires the assembly and cooperative function of both heterodimers. The protein is Isocitrate dehydrogenase [NAD] subunit alpha, mitochondrial of Bos taurus (Bovine).